Reading from the N-terminus, the 413-residue chain is Glutaminase (413 aa).

The glutaminase stretch occupies residues 23-307; sequence GELADYIPEL…LSDDMGLHLM (285 aa). The substrate site is built by S65, N114, E160, N167, Y191, Y243, and V261. Positions 316 to 413 constitute an STAS domain; it reads AVRSITRDGD…SDGTICKERV (98 aa).

This sequence belongs to the glutaminase family. In terms of assembly, homotetramer.

The enzyme catalyses L-glutamine + H2O = L-glutamate + NH4(+). This is Glutaminase (glsA) from Corynebacterium glutamicum (strain ATCC 13032 / DSM 20300 / JCM 1318 / BCRC 11384 / CCUG 27702 / LMG 3730 / NBRC 12168 / NCIMB 10025 / NRRL B-2784 / 534).